The following is a 341-amino-acid chain: MSINIEQAIIHEISQDSQGQLRCRLRPQPLLNSQAVEAMLEELHQTYSGKAGKGFGFFGTHGEDGEANPAFADGLSQYRSGDLGFVEFTGVASKLLQEELAKYDFSQGGFLLMSCYTSMTSDYLFVALLSAKSSMTVLDDMELSQNNHLDLNNIQLAARIDLTEWQADKDSRKYISFIRGRAGRKVADFFLDFMGCVEGVNIKAQNKTLMHAVEDFVSGSELTKDERQQCRDKVFDYCSERAEVGADIELKDLADELADSGMDSFYDFASSGTYELDEEFPADKASLRQLKKFSGTGGGVTLSFDGGHLGERVIYDPISDTLLIKGVPANLKDQLDRRLKG.

It belongs to the YejK family.

It localises to the cytoplasm. Its subcellular location is the nucleoid. In Shewanella denitrificans (strain OS217 / ATCC BAA-1090 / DSM 15013), this protein is Nucleoid-associated protein Sden_2335.